Here is a 399-residue protein sequence, read N- to C-terminus: Forkhead box protein A4 (399 aa).

Positions 119-213 (KPPYSYISLI…ENGCYLRRQK (95 aa)) form a DNA-binding region, fork-head. The span at 219 to 234 (RSKSGEREKKVNKPGD) shows a compositional bias: basic and acidic residues. Residues 219-290 (RSKSGEREKK…VGLSPTSEQA (72 aa)) are disordered. Over residues 267–277 (STGSSIHQASG) the composition is skewed to polar residues.

It localises to the nucleus. Its function is as follows. Transcriptional repressor involved in embryonic nervous system development. Plays a role in the induction and patterning of the anterior-posterior neural axis. Involved in the establishment of floor plate differentiation from neural plate cells during gastrulation. Binds the anf1 promoter sequence to restrict expression of anf1 to the anterior of the neural plate, thereby patterning the forebrain. Can bind to the HNF-3-alpha DNA target sequence. Cooperates with t/bra in a dose-dependent manner to specify dorsal mesoderm formation, including notochord. May be involved in the dorso-ventral patterning of the mesoderm. Binds to DNA via the target sequence 5'-[GA]TAAA[TC]A-3', with 5'-GTAAATA-3' being the preferred binding site. This Xenopus tropicalis (Western clawed frog) protein is Forkhead box protein A4.